Reading from the N-terminus, the 873-residue chain is Tetratricopeptide repeat protein 16 (873 aa).

The disordered stretch occupies residues 1–20 (MTDSDEDALKVDQGPSRDIP). TPR repeat units follow at residues 61-94 (VREYYSRGQQCLEQADWETAVLLFSRALHLDPQL), 96-128 (DFYALRAEAYLQLCDFSSAAQNLRRAYSLQQDN), 136-169 (TFVLYLQGQCLFEQCAFLDALNVFSHAAELQPEK), 251-284 (AQQARQDAGILAVQGKLQHALQRINRAIENNPLD), 285-318 (PSLFLFRGTMYRRLQEFDGAVEDFLKVLDMVTED), 331-364 (LLTYNDFAVHCYRQGAYQEGVLLLNKALRDEQQE), 365-398 (KGLYINRGDCFFQLGNLAFAEADYQQALALSPQD), and 406-439 (GLLQEKMGFCEQRRKQFQKAENHFSTAIRHNPQK). Disordered stretches follow at residues 553–626 (EELK…TSET) and 639–873 (SATA…YEAV). Over residues 571-582 (GEAEAPEEEEEK) the composition is skewed to acidic residues. Over residues 583–593 (EKEKKEEKKSE) the composition is skewed to basic and acidic residues. 3 stretches are compositionally biased toward polar residues: residues 600-626 (ASLSDSYLDQTSSASSMSFRTTGTSET), 639-663 (SATAVTFSDSSLLKTQSSDSGNNRE), and 675-693 (TQGQRQSLSKTEPTQSQRR). Positions 694-708 (NSSKTKATIHKRNSS) are enriched in basic residues. The span at 709 to 750 (KTKATQSQRRNSSKTRATQGQGQSSSKTEATQGQRQSSSEIE) shows a compositional bias: polar residues. Residues 763-784 (KTTRSPRQRPRKVKAARGRSWR) show a composition bias toward basic residues. 2 stretches are compositionally biased toward polar residues: residues 800–828 (RSSTKTEAFYDSNWSLSKTEYAQGQGQRS) and 836–860 (GKSQGMSSTSSKAESTWGPSPSLSK).

The sequence is that of Tetratricopeptide repeat protein 16 (TTC16) from Homo sapiens (Human).